The following is a 62-amino-acid chain: Large ribosomal subunit protein bL28 (62 aa).

The protein belongs to the bacterial ribosomal protein bL28 family.

This is Large ribosomal subunit protein bL28 from Streptococcus uberis (strain ATCC BAA-854 / 0140J).